Consider the following 499-residue polypeptide: Probable aspartyl protease At4g16563 (499 aa).

An N-terminal signal peptide occupies residues 1–26; it reads MKTCLIFFLYTTILQYYFHFSVSSLS. Positions 83–487 constitute a Peptidase A1 domain; sequence YLISLSVGSS…DLLNRRVGFA (405 aa). Residue Asp-101 is part of the active site. Cys-111 and Cys-119 are joined by a disulfide. N-linked (GlcNAc...) asparagine glycans are attached at residues Asn-175 and Asn-211. Asp-353 is a catalytic residue. A disulfide bridge links Cys-396 with Cys-445. N-linked (GlcNAc...) asparagine glycans are attached at residues Asn-400 and Asn-415.

Belongs to the peptidase A1 family.

The polypeptide is Probable aspartyl protease At4g16563 (Arabidopsis thaliana (Mouse-ear cress)).